The chain runs to 122 residues: Ribosomal protein eL22-like (122 aa).

Phosphoserine is present on residues Ser-112, Ser-118, and Ser-120.

This sequence belongs to the eukaryotic ribosomal protein eL22 family.

The polypeptide is Ribosomal protein eL22-like (RPL22L1) (Homo sapiens (Human)).